The primary structure comprises 351 residues: Protein RecA (351 aa).

Position 67 to 74 (67 to 74 (GPESSGKT)) interacts with ATP.

Belongs to the RecA family.

Its subcellular location is the cytoplasm. Can catalyze the hydrolysis of ATP in the presence of single-stranded DNA, the ATP-dependent uptake of single-stranded DNA by duplex DNA, and the ATP-dependent hybridization of homologous single-stranded DNAs. It interacts with LexA causing its activation and leading to its autocatalytic cleavage. The polypeptide is Protein RecA (Arthrobacter sp. (strain FB24)).